We begin with the raw amino-acid sequence, 278 residues long: Esterase dbaE (278 aa).

Catalysis depends on charge relay system residues S124, D220, and H248.

This sequence belongs to the LovG family.

It functions in the pathway secondary metabolite biosynthesis. In terms of biological role, esterase; part of the gene cluster that mediates the biosynthesis of the antibiotic 2,4-dihydroxy-3-methyl-6-(2-oxopropyl)benzaldehyde (DHMBA) and its derivatives. The direct non-reducing polyketide synthase dbaI product is 2,4-dihydroxy-3-methyl-6-(2-oxopropyl)benzaldehyde (DHMBA), produced by condensation of one acetyl-CoA starter unit with 4 malonyl-CoA units and one methylation step. The FAD-dependent monooxygenase dbaH is responsible for the synthesis of yellow pigments derived from the oxidation of DHMBA. The roles of dbaB, C, E and F have still to be determined. In Emericella nidulans (strain FGSC A4 / ATCC 38163 / CBS 112.46 / NRRL 194 / M139) (Aspergillus nidulans), this protein is Esterase dbaE.